A 616-amino-acid polypeptide reads, in one-letter code: Dihydroxy-acid dehydratase (616 aa).

Asp81 is a binding site for Mg(2+). A [2Fe-2S] cluster-binding site is contributed by Cys122. Residues Asp123 and Lys124 each contribute to the Mg(2+) site. Lys124 bears the N6-carboxylysine mark. Residue Cys195 participates in [2Fe-2S] cluster binding. Glu491 serves as a coordination point for Mg(2+). Ser517 serves as the catalytic Proton acceptor.

It belongs to the IlvD/Edd family. As to quaternary structure, homodimer. [2Fe-2S] cluster serves as cofactor. Requires Mg(2+) as cofactor.

It carries out the reaction (2R)-2,3-dihydroxy-3-methylbutanoate = 3-methyl-2-oxobutanoate + H2O. The catalysed reaction is (2R,3R)-2,3-dihydroxy-3-methylpentanoate = (S)-3-methyl-2-oxopentanoate + H2O. Its pathway is amino-acid biosynthesis; L-isoleucine biosynthesis; L-isoleucine from 2-oxobutanoate: step 3/4. The protein operates within amino-acid biosynthesis; L-valine biosynthesis; L-valine from pyruvate: step 3/4. Its function is as follows. Functions in the biosynthesis of branched-chain amino acids. Catalyzes the dehydration of (2R,3R)-2,3-dihydroxy-3-methylpentanoate (2,3-dihydroxy-3-methylvalerate) into 2-oxo-3-methylpentanoate (2-oxo-3-methylvalerate) and of (2R)-2,3-dihydroxy-3-methylbutanoate (2,3-dihydroxyisovalerate) into 2-oxo-3-methylbutanoate (2-oxoisovalerate), the penultimate precursor to L-isoleucine and L-valine, respectively. The chain is Dihydroxy-acid dehydratase from Escherichia fergusonii (strain ATCC 35469 / DSM 13698 / CCUG 18766 / IAM 14443 / JCM 21226 / LMG 7866 / NBRC 102419 / NCTC 12128 / CDC 0568-73).